We begin with the raw amino-acid sequence, 243 residues long: Vesicle-associated membrane protein-associated protein B (243 aa).

At A2 the chain carries N-acetylalanine. Residues 2-218 (AKVEQVLSLE…PAPATPGKEE (217 aa)) lie on the Cytoplasmic side of the membrane. The region spanning 7–124 (VLSLEPQHEL…MDSKLRCVFE (118 aa)) is the MSP domain. Phosphoserine is present on S146. K147 is covalently cross-linked (Glycyl lysine isopeptide (Lys-Gly) (interchain with G-Cter in SUMO1)). At T150 the chain carries Phosphothreonine. Phosphoserine is present on residues S158 and S159. Residues 161-196 (LDDTEVKKVMEECKRLQSEVQRLREENKQLKEEDGL) are a coiled coil. Residues 185–197 (EENKQLKEEDGLR) show a composition bias toward basic and acidic residues. Positions 185 to 217 (EENKQLKEEDGLRMRKPVLSNSPAPAPATPGKE) are disordered. S206 carries the phosphoserine modification. The chain crosses the membrane as a helical; Anchor for type IV membrane protein span at residues 219 to 239 (GLSTRLLALVVLFFIVGVIIG).

It belongs to the VAMP-associated protein (VAP) (TC 9.B.17) family. Homodimer, and heterodimer with VAPA. Interacts with VAMP1 and VAMP2. Interacts (via MSP domain) with ZFYVE27. Interacts with RMDN3. Interacts with KIF5A in a ZFYVE27-dependent manner. Interacts (via MSP domain) with STARD3 (via phospho-FFAT motif). Interacts with STARD3NL (via FFAT motif). Interacts with CERT1. Interacts with PLEKHA3 and SACM1L to form a ternary complex. Interacts with VPS13A (via FFAT motif). Interacts with RB1CC1 (via phosphorylated FFAT motif), MIGA2 (via phosphorylated FFAT motif), RMDN3 (via phosphorylated FFAT motif), OSBPL1A (via FFAT motif), KCNB1 (via phosphorylated FFAT motif) and KCNB2 (via phosphorylated FFAT motif). Interacts (via MSP domain) with WDR44 (via FFAT motif); the interactions connect the endoplasmic reticulum (ER) with the endosomal tubule.

The protein localises to the endoplasmic reticulum membrane. Functionally, endoplasmic reticulum (ER)-anchored protein that mediates the formation of contact sites between the ER and endosomes via interaction with FFAT motif-containing proteins such as STARD3 or WDR44. Interacts with STARD3 in a FFAT motif phosphorylation dependent manner. Via interaction with WDR44 participates in neosynthesized protein export. Participates in the endoplasmic reticulum unfolded protein response (UPR) by inducing ERN1/IRE1 activity. Involved in cellular calcium homeostasis regulation. This chain is Vesicle-associated membrane protein-associated protein B, found in Sus scrofa (Pig).